A 344-amino-acid polypeptide reads, in one-letter code: Ion-translocating oxidoreductase complex subunit D (344 aa).

4 helical membrane passes run 23-43 (LVLG…GPGT), 44-64 (LLNL…MLAL), 77-99 (SALV…WLTL), and 120-140 (PFNP…LEMT). FMN phosphoryl threonine is present on T172. A run of 5 helical transmembrane segments spans residues 198 to 218 (LGSA…LFLL), 222 to 242 (LFTW…SLLF), 252 to 272 (GSPL…FIVT), 285 to 305 (LVFG…GGYP), and 306 to 326 (DGMA…DYYT).

The protein belongs to the NqrB/RnfD family. As to quaternary structure, the complex is composed of six subunits: RnfA, RnfB, RnfC, RnfD, RnfE and RnfG. FMN serves as cofactor.

Its subcellular location is the cell inner membrane. Functionally, part of a membrane-bound complex that couples electron transfer with translocation of ions across the membrane. The protein is Ion-translocating oxidoreductase complex subunit D of Pseudomonas aeruginosa (strain LESB58).